We begin with the raw amino-acid sequence, 251 residues long: Triosephosphate isomerase (251 aa).

9 to 11 (NWK) contributes to the substrate binding site. The active-site Electrophile is H95. E167 acts as the Proton acceptor in catalysis. Substrate is bound by residues G173, S213, and 234–235 (GG).

The protein belongs to the triosephosphate isomerase family. Homodimer.

The protein localises to the cytoplasm. It carries out the reaction D-glyceraldehyde 3-phosphate = dihydroxyacetone phosphate. It participates in carbohydrate biosynthesis; gluconeogenesis. The protein operates within carbohydrate degradation; glycolysis; D-glyceraldehyde 3-phosphate from glycerone phosphate: step 1/1. Its function is as follows. Involved in the gluconeogenesis. Catalyzes stereospecifically the conversion of dihydroxyacetone phosphate (DHAP) to D-glyceraldehyde-3-phosphate (G3P). This Geobacter metallireducens (strain ATCC 53774 / DSM 7210 / GS-15) protein is Triosephosphate isomerase.